We begin with the raw amino-acid sequence, 524 residues long: Cytochrome P450 4F1 (524 aa).

The chain crosses the membrane as a helical span at residues valine 15 to leucine 35. Heme contacts are provided by glutamate 328 and cysteine 468.

It belongs to the cytochrome P450 family. It depends on heme as a cofactor. Expressed in liver.

It localises to the endoplasmic reticulum membrane. Its subcellular location is the microsome membrane. It catalyses the reaction (5Z,8Z,11Z,14Z)-eicosatetraenoate + reduced [NADPH--hemoprotein reductase] + O2 = 20-hydroxy-(5Z,8Z,11Z,14Z)-eicosatetraenoate + oxidized [NADPH--hemoprotein reductase] + H2O + H(+). The enzyme catalyses 5-hydroxy-(6E,8Z,11Z,14Z)-eicosatetraenoate + reduced [NADPH--hemoprotein reductase] + O2 = 5,20-dihydroxy-(6E,8Z,11Z,14Z)-eicosatetraenoate + oxidized [NADPH--hemoprotein reductase] + H2O + H(+). It carries out the reaction 8-hydroxy-(5Z,9E,11Z,14Z)-eicosatetraenoate + reduced [NADPH--hemoprotein reductase] + O2 = 8,20-dihydroxy-(5Z,9E,11Z,14Z)-eicosatetraenoate + oxidized [NADPH--hemoprotein reductase] + H2O + H(+). The catalysed reaction is leukotriene B4 + reduced [NADPH--hemoprotein reductase] + O2 = 20-hydroxy-leukotriene B4 + oxidized [NADPH--hemoprotein reductase] + H2O + H(+). It catalyses the reaction 6-trans-leukotriene B4 + reduced [NADPH--hemoprotein reductase] + O2 = 20-hydroxy-6-trans-leukotriene B4 + oxidized [NADPH--hemoprotein reductase] + H2O + H(+). The enzyme catalyses lipoxin A4 + reduced [NADPH--hemoprotein reductase] + O2 = 20-hydroxy-lipoxin A4 + oxidized [NADPH--hemoprotein reductase] + H2O + H(+). In terms of biological role, a cytochrome P450 monooxygenase involved in the metabolism of arachidonic acid and its oxygenated derivatives. Mechanistically, uses molecular oxygen inserting one oxygen atom into a substrate, and reducing the second into a water molecule, with two electrons provided by NADPH via cytochrome P450 reductase (CPR; NADPH-ferrihemoprotein reductase). Participates in the conversion of arachidonic acid to omega-hydroxyeicosatetraenoic acid (20-HETE), a signaling molecule acting both as vasoconstrictive and natriuretic with overall effect on arterial blood pressure. May play a role in the oxidative inactivation of eicosanoids, including both pro-inflammatory and anti-inflammatory mediators such as leukotriene B4 (LTB4), lipoxin A4 (LXA4), and several HETEs. The protein is Cytochrome P450 4F1 of Rattus norvegicus (Rat).